A 347-amino-acid chain; its full sequence is Transcription factor JunB (347 aa).

Glycyl lysine isopeptide (Lys-Gly) (interchain with G-Cter in SUMO2) cross-links involve residues Lys-4, Lys-33, and Lys-36. The disordered stretch occupies residues 51-73; it reads KAPGARGPGPEGGGGGSYFSGQG. A compositionally biased stretch (gly residues) spans 56–68; the sequence is RGPGPEGGGGGSY. Residue Lys-81 forms a Glycyl lysine isopeptide (Lys-Gly) (interchain with G-Cter in SUMO2) linkage. 2 positions are modified to phosphothreonine: Thr-102 and Thr-104. Residue Ser-117 is modified to Phosphoserine. Lys-141 participates in a covalent cross-link: Glycyl lysine isopeptide (Lys-Gly) (interchain with G-Cter in SUMO2). The span at 239–253 shows a compositional bias: basic and acidic residues; that stretch reads FKEEPQTVPEARSRD. Positions 239–260 are disordered; that stretch reads FKEEPQTVPEARSRDATPPVSP. The residue at position 240 (Lys-240) is an N6-acetyllysine; alternate. Lys-240 participates in a covalent cross-link: Glycyl lysine isopeptide (Lys-Gly) (interchain with G-Cter in SUMO1); alternate. Residue Lys-240 forms a Glycyl lysine isopeptide (Lys-Gly) (interchain with G-Cter in SUMO2); alternate linkage. The residue at position 251 (Ser-251) is a Phosphoserine. A Phosphothreonine modification is found at Thr-255. Residue Ser-259 is modified to Phosphoserine. The basic motif stretch occupies residues 268–295; that stretch reads RIKVERKRLRNRLAATKCRKRKLERIAR. The 64-residue stretch at 268-331 folds into the bZIP domain; the sequence is RIKVERKRLR…AQLKQKVMTH (64 aa). Residues 296–324 are leucine-zipper; sequence LEDKVKTLKAENAGLSSTAGLLREQVAQL. Residue Lys-343 forms a Glycyl lysine isopeptide (Lys-Gly) (interchain with G-Cter in SUMO2) linkage.

This sequence belongs to the bZIP family. Jun subfamily. As to quaternary structure, binds DNA as a homodimer or as a heterodimer with another member of the Jun/Fos family. Component of an AP-1 transcription factor complex composed of JUN-FOS heterodimers composed of JUN-FOS heterodimers. As part of the AP-1 transcription factor complex, forms heterodimers with FOSB, thereby binding to the AP-1 consensus sequence and stimulating transcription. Interacts with ITCH (via its WW domains). In terms of processing, ubiquitinated by ITCH, leading to its degradation.

The protein resides in the nucleus. Transcription factor involved in regulating gene activity following the primary growth factor response. Binds to the DNA sequence 5'-TGA[GC]TCA-3'. Heterodimerizes with proteins of the FOS family to form an AP-1 transcription complex, thereby enhancing its DNA binding activity to an AP-1 consensus sequence and its transcriptional activity. In Homo sapiens (Human), this protein is Transcription factor JunB (JUNB).